The chain runs to 455 residues: Bifunctional protein GlmU (455 aa).

The tract at residues 1 to 226 (MGLSVVILAA…EFEILGVNDR (226 aa)) is pyrophosphorylase. UDP-N-acetyl-alpha-D-glucosamine-binding positions include 8–11 (LAAG), K22, Q73, 78–79 (GT), 99–101 (YGD), G136, E151, N166, and N224. Mg(2+) is bound at residue D101. Residue N224 participates in Mg(2+) binding. Residues 227–247 (TQLASLERVWQRNVAEKIMAK) are linker. The interval 248–455 (GVSIADPNRF…WQRSVKKTDK (208 aa)) is N-acetyltransferase. Residues R330 and K348 each coordinate UDP-N-acetyl-alpha-D-glucosamine. The Proton acceptor role is filled by H360. The UDP-N-acetyl-alpha-D-glucosamine site is built by Y363 and N374. Acetyl-CoA is bound by residues A377, 383–384 (NY), S402, A420, and R437.

In the N-terminal section; belongs to the N-acetylglucosamine-1-phosphate uridyltransferase family. It in the C-terminal section; belongs to the transferase hexapeptide repeat family. In terms of assembly, homotrimer. Mg(2+) is required as a cofactor.

It is found in the cytoplasm. It carries out the reaction alpha-D-glucosamine 1-phosphate + acetyl-CoA = N-acetyl-alpha-D-glucosamine 1-phosphate + CoA + H(+). The enzyme catalyses N-acetyl-alpha-D-glucosamine 1-phosphate + UTP + H(+) = UDP-N-acetyl-alpha-D-glucosamine + diphosphate. The protein operates within nucleotide-sugar biosynthesis; UDP-N-acetyl-alpha-D-glucosamine biosynthesis; N-acetyl-alpha-D-glucosamine 1-phosphate from alpha-D-glucosamine 6-phosphate (route II): step 2/2. It functions in the pathway nucleotide-sugar biosynthesis; UDP-N-acetyl-alpha-D-glucosamine biosynthesis; UDP-N-acetyl-alpha-D-glucosamine from N-acetyl-alpha-D-glucosamine 1-phosphate: step 1/1. Its pathway is bacterial outer membrane biogenesis; LPS lipid A biosynthesis. In terms of biological role, catalyzes the last two sequential reactions in the de novo biosynthetic pathway for UDP-N-acetylglucosamine (UDP-GlcNAc). The C-terminal domain catalyzes the transfer of acetyl group from acetyl coenzyme A to glucosamine-1-phosphate (GlcN-1-P) to produce N-acetylglucosamine-1-phosphate (GlcNAc-1-P), which is converted into UDP-GlcNAc by the transfer of uridine 5-monophosphate (from uridine 5-triphosphate), a reaction catalyzed by the N-terminal domain. In Francisella tularensis subsp. tularensis (strain FSC 198), this protein is Bifunctional protein GlmU.